Here is a 143-residue protein sequence, read N- to C-terminus: Transcription antitermination protein NusB (143 aa).

The protein belongs to the NusB family.

Its function is as follows. Involved in transcription antitermination. Required for transcription of ribosomal RNA (rRNA) genes. Binds specifically to the boxA antiterminator sequence of the ribosomal RNA (rrn) operons. This Anaeromyxobacter sp. (strain Fw109-5) protein is Transcription antitermination protein NusB.